The chain runs to 375 residues: Succinyl-diaminopimelate desuccinylase (375 aa).

Histidine 66 provides a ligand contact to Zn(2+). The active site involves aspartate 68. Residue aspartate 99 participates in Zn(2+) binding. Catalysis depends on glutamate 133, which acts as the Proton acceptor. The Zn(2+) site is built by glutamate 134, glutamate 162, and histidine 348.

This sequence belongs to the peptidase M20A family. DapE subfamily. As to quaternary structure, homodimer. The cofactor is Zn(2+). Co(2+) is required as a cofactor.

The enzyme catalyses N-succinyl-(2S,6S)-2,6-diaminopimelate + H2O = (2S,6S)-2,6-diaminopimelate + succinate. The protein operates within amino-acid biosynthesis; L-lysine biosynthesis via DAP pathway; LL-2,6-diaminopimelate from (S)-tetrahydrodipicolinate (succinylase route): step 3/3. Functionally, catalyzes the hydrolysis of N-succinyl-L,L-diaminopimelic acid (SDAP), forming succinate and LL-2,6-diaminopimelate (DAP), an intermediate involved in the bacterial biosynthesis of lysine and meso-diaminopimelic acid, an essential component of bacterial cell walls. This chain is Succinyl-diaminopimelate desuccinylase, found in Shigella flexneri serotype 5b (strain 8401).